The primary structure comprises 342 residues: Methylthioribose-1-phosphate isomerase (342 aa).

Residues 44–46 (RGA), Arg87, and Gln194 each bind substrate. Residue Asp235 is the Proton donor of the active site. 245 to 246 (NK) contacts substrate.

The protein belongs to the eIF-2B alpha/beta/delta subunits family. MtnA subfamily.

The enzyme catalyses 5-(methylsulfanyl)-alpha-D-ribose 1-phosphate = 5-(methylsulfanyl)-D-ribulose 1-phosphate. Its pathway is amino-acid biosynthesis; L-methionine biosynthesis via salvage pathway; L-methionine from S-methyl-5-thio-alpha-D-ribose 1-phosphate: step 1/6. Functionally, catalyzes the interconversion of methylthioribose-1-phosphate (MTR-1-P) into methylthioribulose-1-phosphate (MTRu-1-P). This is Methylthioribose-1-phosphate isomerase from Acetivibrio thermocellus (strain ATCC 27405 / DSM 1237 / JCM 9322 / NBRC 103400 / NCIMB 10682 / NRRL B-4536 / VPI 7372) (Clostridium thermocellum).